We begin with the raw amino-acid sequence, 194 residues long: MFPRPVLNSRAQAILLPQPPNMLDHRQWPPRLASFPFTKTGMLSRATSVLAGLTAHLWDLGGGAGRRTSKAQRVHPQPSHQRQPPPPQHPGPYQERIWVGGEGWGEVGGLRLSKVGRRDREVGRGLRAPAGRGRAMGGMPRMGTVGDFGQALSSLAWTSTCFQDFCLPSLPGKLPAPLISKQQFLSNSSRSLFN.

Residues 62-93 form a disordered region; sequence GGAGRRTSKAQRVHPQPSHQRQPPPPQHPGPY.

Expressed most abundantly in the brain at protein level. Present in cortex, cerebellum and midbrain. Found in neurons. Elevated expressions detected in Alzheimer brain samples. Also expressed in testis.

It localises to the cytoplasm. This is an uncharacterized protein from Homo sapiens (Human).